A 393-amino-acid polypeptide reads, in one-letter code: MTNSNRIKLTWISFLSYALTGALVIVTGMVMGNIAEYFNLPVSSMSNTFTFLNAGILISIFLNAWLMEIIPLKTQLRFGFVLMVLAVAGLMLSHSLALFSAAMFVLGLVSGITMSIGTFLITQMYEGRQRGSRLLFTDSFFSMAGMIFPMVAAYLLARSIEWYWVYACIGLVYVAIFILTFGCEFPALGKHAPKTETPVVKEKWGIGVLFLSIAALCYILGQLGFISWVPEYAKGLGMSLNDAGTLVSDFWMSYMFGMWAFSFILRFFDLQRILTVLAGLAAVLMYLFIKAQPEHMAWFILTLGFFSSAIYTSIITLGSQQTKVPSPKLVNFVLTCGTIGTMLTFVVTGPIVAHSGPQAALLTANGLYAVVFVMCFILGFVTRHRQHNVPAAH.

12 consecutive transmembrane segments (helical) span residues 11-31, 51-71, 78-98, 101-121, 134-154, 162-182, 206-226, 245-265, 273-293, 297-317, 332-352, and 361-381; these read WISF…GMVM, FLNA…EIIP, FGFV…SLAL, AAMF…TFLI, LLFT…VAAY, WYWV…LTFG, IGVL…LGFI, TLVS…SFIL, ILTV…KAQP, AWFI…IITL, FVLT…GPIV, and LLTA…LGFV.

Belongs to the major facilitator superfamily. TsgA family.

The protein localises to the cell inner membrane. In Citrobacter koseri (strain ATCC BAA-895 / CDC 4225-83 / SGSC4696), this protein is Protein TsgA homolog.